Reading from the N-terminus, the 571-residue chain is Arginine--tRNA ligase (571 aa).

A 'HIGH' region motif is present at residues 122-132 (PNIAKEMHVGH).

It belongs to the class-I aminoacyl-tRNA synthetase family. In terms of assembly, monomer.

Its subcellular location is the cytoplasm. It catalyses the reaction tRNA(Arg) + L-arginine + ATP = L-arginyl-tRNA(Arg) + AMP + diphosphate. The polypeptide is Arginine--tRNA ligase (Buchnera aphidicola subsp. Cinara cedri (strain Cc)).